The following is a 243-amino-acid chain: 3-deoxy-manno-octulosonate cytidylyltransferase (243 aa).

It belongs to the KdsB family.

Its subcellular location is the cytoplasm. It carries out the reaction 3-deoxy-alpha-D-manno-oct-2-ulosonate + CTP = CMP-3-deoxy-beta-D-manno-octulosonate + diphosphate. Its pathway is nucleotide-sugar biosynthesis; CMP-3-deoxy-D-manno-octulosonate biosynthesis; CMP-3-deoxy-D-manno-octulosonate from 3-deoxy-D-manno-octulosonate and CTP: step 1/1. The protein operates within bacterial outer membrane biogenesis; lipopolysaccharide biosynthesis. In terms of biological role, activates KDO (a required 8-carbon sugar) for incorporation into bacterial lipopolysaccharide in Gram-negative bacteria. The chain is 3-deoxy-manno-octulosonate cytidylyltransferase from Bartonella henselae (strain ATCC 49882 / DSM 28221 / CCUG 30454 / Houston 1) (Rochalimaea henselae).